Here is a 505-residue protein sequence, read N- to C-terminus: Maturase K (505 aa).

It belongs to the intron maturase 2 family. MatK subfamily.

It localises to the plastid. The protein resides in the chloroplast. In terms of biological role, usually encoded in the trnK tRNA gene intron. Probably assists in splicing its own and other chloroplast group II introns. The protein is Maturase K of Nuphar variegata (Yellow pond lily).